The chain runs to 403 residues: Lissencephaly-1 homolog 1 (403 aa).

In terms of domain architecture, LisH spans 7-38; that stretch reads QRDELNQAIHQYLLISYQQSAQLFKTEAAVKD. A coiled-coil region spans residues 51 to 87; sequence NSIVRLSKRVITLEQQVEQLNEQLAQAQAGKIQFNKS. WD repeat units lie at residues 103–142, 145–184, 187–226, 229–270, 271–327, 330–369, and 373–403; these read GHRAGVNCVAFHPQYQILGSASDDGSIKLWDYESGHFEKT, GHTSNVNCLAFDPTGKYICSASSDLSIKIWELKNHTCVKT, GHEHSVSTVQFSDHGDFILSASRDKNIKLWEVATGFCKKT, EHQE…HQLS, GHEH…NLFT, GHDNWVNGVSFHPDGVHMLSVSDDKTIRVWNLKEQKQKKK, and AHDKFILKCEINKFIFATCSVDQTIKLWLLS.

Belongs to the WD repeat LIS1/nudF family.

The protein resides in the cytoplasm. The protein localises to the cytoskeleton. It is found in the microtubule organizing center. Its subcellular location is the centrosome. Functionally, positively regulates the activity of the minus-end directed microtubule motor protein dynein. May enhance dynein-mediated microtubule sliding by targeting dynein to the microtubule plus end. Required for several dynein- and microtubule-dependent processes. In Paramecium tetraurelia, this protein is Lissencephaly-1 homolog 1.